The primary structure comprises 502 residues: Glycerol kinase (502 aa).

Residue Thr14 participates in ADP binding. Thr14, Thr15, and Ser16 together coordinate ATP. Sn-glycerol 3-phosphate is bound at residue Thr14. Arg18 is an ADP binding site. Residues Arg84, Glu85, Tyr136, and Asp246 each coordinate sn-glycerol 3-phosphate. Glycerol-binding residues include Arg84, Glu85, Tyr136, Asp246, and Gln247. ADP contacts are provided by Thr268 and Gly311. ATP is bound by residues Thr268, Gly311, Gln315, and Gly412. ADP contacts are provided by Gly412 and Asn416.

This sequence belongs to the FGGY kinase family. As to quaternary structure, homotetramer and homodimer (in equilibrium). Heterodimer with EIIA-Glc. Binds 1 zinc ion per glycerol kinase EIIA-Glc dimer. The zinc ion is important for dimerization.

It carries out the reaction glycerol + ATP = sn-glycerol 3-phosphate + ADP + H(+). It functions in the pathway polyol metabolism; glycerol degradation via glycerol kinase pathway; sn-glycerol 3-phosphate from glycerol: step 1/1. Activity of this regulatory enzyme is affected by several metabolites. Allosterically and non-competitively inhibited by fructose 1,6-bisphosphate (FBP) and unphosphorylated phosphocarrier protein EIIA-Glc (III-Glc), an integral component of the bacterial phosphotransferase (PTS) system. Functionally, key enzyme in the regulation of glycerol uptake and metabolism. Catalyzes the phosphorylation of glycerol to yield sn-glycerol 3-phosphate. The chain is Glycerol kinase from Escherichia coli O127:H6 (strain E2348/69 / EPEC).